The chain runs to 409 residues: Na(+)/H(+) antiporter NhaA (409 aa).

A run of 11 helical transmembrane segments spans residues 13 to 33, 58 to 78, 93 to 113, 120 to 140, 153 to 173, 176 to 196, 216 to 236, 256 to 276, 279 to 299, 326 to 346, and 363 to 383; these read SGGI…NTFL, LILW…GLEL, IALP…IFYL, FALG…LGIL, IFLM…IALF, SELS…LFAL, VAVL…AFFI, LHGW…AGIS, GVGL…GLFV, FIQL…SLFI, and LAIL…LKFS.

Belongs to the NhaA Na(+)/H(+) (TC 2.A.33) antiporter family.

Its subcellular location is the cell inner membrane. The enzyme catalyses Na(+)(in) + 2 H(+)(out) = Na(+)(out) + 2 H(+)(in). Its function is as follows. Na(+)/H(+) antiporter that extrudes sodium in exchange for external protons. This chain is Na(+)/H(+) antiporter NhaA, found in Campylobacter concisus (strain 13826).